A 426-amino-acid polypeptide reads, in one-letter code: Trigger factor (426 aa).

The PPIase FKBP-type domain maps to 160–240 (GDTVIGDVTK…IKEVKHLELP (81 aa)).

This sequence belongs to the FKBP-type PPIase family. Tig subfamily.

It is found in the cytoplasm. The enzyme catalyses [protein]-peptidylproline (omega=180) = [protein]-peptidylproline (omega=0). In terms of biological role, involved in protein export. Acts as a chaperone by maintaining the newly synthesized protein in an open conformation. Functions as a peptidyl-prolyl cis-trans isomerase. The protein is Trigger factor of Chlorobaculum tepidum (strain ATCC 49652 / DSM 12025 / NBRC 103806 / TLS) (Chlorobium tepidum).